We begin with the raw amino-acid sequence, 448 residues long: tRNA-2-methylthio-N(6)-dimethylallyladenosine synthase (448 aa).

An MTTase N-terminal domain is found at 2 to 119; it reads KKLYIKTFGC…LSDLIAKRRE (118 aa). [4Fe-4S] cluster is bound by residues C11, C48, C82, C156, C160, and C163. Residues 142 to 377 form the Radical SAM core domain; sequence RQTRGSAYVS…LVESQANQIS (236 aa). The region spanning 378–444 is the TRAM domain; the sequence is QKMLGNIERV…NYTLRGKLVE (67 aa).

Belongs to the methylthiotransferase family. MiaB subfamily. Monomer. The cofactor is [4Fe-4S] cluster.

The protein localises to the cytoplasm. It catalyses the reaction N(6)-dimethylallyladenosine(37) in tRNA + (sulfur carrier)-SH + AH2 + 2 S-adenosyl-L-methionine = 2-methylsulfanyl-N(6)-dimethylallyladenosine(37) in tRNA + (sulfur carrier)-H + 5'-deoxyadenosine + L-methionine + A + S-adenosyl-L-homocysteine + 2 H(+). Catalyzes the methylthiolation of N6-(dimethylallyl)adenosine (i(6)A), leading to the formation of 2-methylthio-N6-(dimethylallyl)adenosine (ms(2)i(6)A) at position 37 in tRNAs that read codons beginning with uridine. The chain is tRNA-2-methylthio-N(6)-dimethylallyladenosine synthase from Polynucleobacter necessarius subsp. necessarius (strain STIR1).